A 370-amino-acid polypeptide reads, in one-letter code: Ubiquitin-binding protein Rv1468c (370 aa).

The segment at 1–72 (MSFVVANTEF…QVLSAQAAAF (72 aa)) is UBA. The region spanning 1 to 93 (MSFVVANTEF…AQAYAAAEAT (93 aa)) is the PE domain.

The protein belongs to the mycobacterial PE family. PGRS subfamily. As to quaternary structure, interacts directly with host polyubiquitin in a UBA-dependent manner.

It localises to the secreted. Its subcellular location is the cell wall. The protein resides in the cell surface. Mediates direct binding of host ubiquitin (Ub) to the mycobacterial surface, which triggers host xenophagy. Interaction between Rv1468c and ubiquitin recruits autophagy receptor p62 to deliver mycobacteria into LC3-associated autophagosomes. It could be a viable evolutionary strategy adopted by M.tuberculosis to maintain long-term intracellular survival through self-controlling its intracellular bacterial loads to avoid excessive host inflammatory immune responses. This is Ubiquitin-binding protein Rv1468c from Mycobacterium tuberculosis (strain ATCC 25618 / H37Rv).